The chain runs to 346 residues: Dimethyladenosine transferase 1, mitochondrial (346 aa).

The transit peptide at 1–27 (MAASGKLSTCRLPPLPTIREIIKLLRL) directs the protein to the mitochondrion. 7 residues coordinate S-adenosyl-L-methionine: L38, G63, E85, K86, D111, V112, and N141.

Belongs to the class I-like SAM-binding methyltransferase superfamily. rRNA adenine N(6)-methyltransferase family. KsgA subfamily. As to quaternary structure, interacts with mitochondrial RNA polymerase POLRMT. Interacts with TFAM. Bound to the maturing mtSSU until the late stages of assembly. Ubiquitously expressed.

The protein resides in the mitochondrion. It catalyses the reaction adenosine(N)/adenosine(N+1) in rRNA + 4 S-adenosyl-L-methionine = N(6)-dimethyladenosine(N)/N(6)-dimethyladenosine(N+1) in rRNA + 4 S-adenosyl-L-homocysteine + 4 H(+). Its function is as follows. Mitochondrial methyltransferase which uses S-adenosyl methionine to dimethylate two highly conserved adjacent adenosine residues (A1583 and A1584) within the loop of helix 45 at the 3-prime end of 12S rRNA, thereby regulating the assembly or stability of the small subunit of the mitochondrial ribosome. Also required for basal transcription of mitochondrial DNA, probably via its interaction with POLRMT and TFAM. Stimulates transcription independently of the methyltransferase activity. This chain is Dimethyladenosine transferase 1, mitochondrial, found in Homo sapiens (Human).